Consider the following 379-residue polypeptide: Homoserine O-succinyltransferase (379 aa).

The AB hydrolase-1 domain occupies 51 to 360 (NAVLICHALS…DAPQGHDAFL (310 aa)). Residue Ser157 is the Nucleophile of the active site. Arg227 provides a ligand contact to substrate. Active-site residues include Asp323 and His356. Asp357 serves as a coordination point for substrate.

The protein belongs to the AB hydrolase superfamily. MetX family. As to quaternary structure, homodimer.

The protein resides in the cytoplasm. The enzyme catalyses L-homoserine + succinyl-CoA = O-succinyl-L-homoserine + CoA. It functions in the pathway amino-acid biosynthesis; L-methionine biosynthesis via de novo pathway; O-succinyl-L-homoserine from L-homoserine: step 1/1. Functionally, transfers a succinyl group from succinyl-CoA to L-homoserine, forming succinyl-L-homoserine. This chain is Homoserine O-succinyltransferase, found in Pseudomonas paraeruginosa (strain DSM 24068 / PA7) (Pseudomonas aeruginosa (strain PA7)).